We begin with the raw amino-acid sequence, 88 residues long: UPF0297 protein BLi02868/BL02032 (88 aa).

The protein belongs to the UPF0297 family.

The sequence is that of UPF0297 protein BLi02868/BL02032 from Bacillus licheniformis (strain ATCC 14580 / DSM 13 / JCM 2505 / CCUG 7422 / NBRC 12200 / NCIMB 9375 / NCTC 10341 / NRRL NRS-1264 / Gibson 46).